Here is a 177-residue protein sequence, read N- to C-terminus: ATP synthase subunit delta (177 aa).

The protein belongs to the ATPase delta chain family. As to quaternary structure, F-type ATPases have 2 components, F(1) - the catalytic core - and F(0) - the membrane proton channel. F(1) has five subunits: alpha(3), beta(3), gamma(1), delta(1), epsilon(1). F(0) has three main subunits: a(1), b(2) and c(10-14). The alpha and beta chains form an alternating ring which encloses part of the gamma chain. F(1) is attached to F(0) by a central stalk formed by the gamma and epsilon chains, while a peripheral stalk is formed by the delta and b chains.

It is found in the cell inner membrane. In terms of biological role, f(1)F(0) ATP synthase produces ATP from ADP in the presence of a proton or sodium gradient. F-type ATPases consist of two structural domains, F(1) containing the extramembraneous catalytic core and F(0) containing the membrane proton channel, linked together by a central stalk and a peripheral stalk. During catalysis, ATP synthesis in the catalytic domain of F(1) is coupled via a rotary mechanism of the central stalk subunits to proton translocation. Its function is as follows. This protein is part of the stalk that links CF(0) to CF(1). It either transmits conformational changes from CF(0) to CF(1) or is implicated in proton conduction. This chain is ATP synthase subunit delta, found in Aliivibrio fischeri (strain ATCC 700601 / ES114) (Vibrio fischeri).